The sequence spans 229 residues: Sperm flagellar protein 1 (229 aa).

A Calponin-homology (CH) domain is found at 7 to 115 (EETMQELYTW…TLRQKIEEKQ (109 aa)). Residues 122 to 169 (ADLSQDQATQNNGNTHSDKGYKSNGTELSPRQGARVDPASKTHQGYAQ) form a disordered region. The span at 123 to 136 (DLSQDQATQNNGNT) shows a compositional bias: polar residues. The interval 178–229 (RFQLAEKEQTLILSQETIQILQAKLRRLEQLLLLKNVRIDDLTRRLQELEKK) is essential for homodimerization and microtubule bundling activity.

As to quaternary structure, homodimer.

It is found in the cytoplasm. The protein localises to the cytoskeleton. Its subcellular location is the cilium axoneme. The protein resides in the apical cell membrane. In terms of biological role, microtubule-associated protein involved in the stabilization of microtubules along the axis of migration during radial intercalation. Promotes the establishment and stabilization of an axis of microtubules required for the active migration of cells into the outer epithelium. Microtubule-associated protein that promotes microtubule bundling and stabilizes microtubules against depolymerization in response to cold shock. Essential for ciliary central apparatus formation which requires both its microtubule-binding and bundling activities. Regulates planar cell polarity signaling pathway and asymmetric microtubule accumulation in ciliated epithelia. This chain is Sperm flagellar protein 1, found in Xenopus laevis (African clawed frog).